We begin with the raw amino-acid sequence, 28 residues long: Flagellar filament 34 kDa core protein (28 aa).

Belongs to the bacterial flagellin family. In terms of assembly, the flagellum consists of an outer layer composed of repeating units of FlaA around a core that contains several antigenically related polypeptides.

It is found in the periplasmic flagellum. Its subcellular location is the periplasm. In terms of biological role, component of the core of the flagella. The protein is Flagellar filament 34 kDa core protein of Treponema phagedenis.